Reading from the N-terminus, the 535-residue chain is Importin subunit alpha-2 (535 aa).

The IBB domain occupies 1–58 (MSLRPNAKTEVRRNRYKVAVDAEEGRRRREDNMVEIRKSKREESLQKKRREGLQANQL). Positions 20–46 (VDAEEGRRRREDNMVEIRKSKREESLQ) are enriched in basic and acidic residues. The segment at 20–67 (VDAEEGRRRREDNMVEIRKSKREESLQKKRREGLQANQLPQFAPSPVP) is disordered. ARM repeat units lie at residues 67 to 106 (PASSTVEKKLESLPAMVGGVWSDDRSLQLEATTQFRKLLS), 110 to 150 (SPPI…NIAS), 153 to 192 (SENTKVVIEHGAVPIFVQLLASQSDDVREQAVWALGNVAG), 195 to 235 (PRCR…NFCR), 237 to 276 (KPQPPFDQVRPALPALERLIHSTDEEVLTDACWALSYLSD), 279 to 318 (NDKIQSVIEAGVVPRLVELLQHQSPSVLIPALRSIGNIVT), 321 to 361 (DLQT…NITA), 364 to 403 (RDQIQAVCEAGLICPLVNLLQNAEFDIKKEAAWAISNATS), 407 to 446 (PDQIKYMVEQGVVKPLCDLLVCPDPRIITVCLEGLENILK), and 461 to 500 (NFYAQLIDDAEGLEKIENLQSHDNSEIYEKAVKILETYWL).

The protein belongs to the importin alpha family. As to quaternary structure, forms a complex with the importin subunit beta-1 KPNB1. Interacts with A.tumefaciens VirD2 and VirE2. Binds to SWO1.

It localises to the nucleus envelope. Its function is as follows. Binds to conventional NLS motifs and mediates nuclear protein import across the nuclear envelope. Involved in the maintenance of cell wall integrity under salt stress via interaction with SWO1. Acts as a cellular receptor for the nuclear import of the virD2 protein of Agrobacterium, but is not essential for Agrobacterium-mediated root transformation. This Arabidopsis thaliana (Mouse-ear cress) protein is Importin subunit alpha-2.